Consider the following 473-residue polypeptide: mRNA export factor ICP27 homolog (473 aa).

Disordered stretches follow at residues 57–81 and 123–143; these read QELL…NSIY and QTKR…NFPM. The Zn(2+) site is built by Cys-362, His-438, Cys-442, and Cys-447. A CHC2-type zinc finger spans residues 362–447; that stretch reads CKYGTEKRSM…HTRRCSDPAC (86 aa).

The protein belongs to the HHV-1 ICP27 protein family. Associates in a complex with RNA, and host export factors NXF1/TAP and ALYREF; these interactions allow nuclear export of viral transcripts.

The protein localises to the host cytoplasm. It is found in the host nucleus. Its function is as follows. Multifunctional regulator of the expression of viral genes that mediates nuclear export of viral intronless mRNAs. This immediate early (EI) protein promotes the nuclear export of viral intronless mRNAs by interacting with mRNAs and host NXF1/TAP. The polypeptide is mRNA export factor ICP27 homolog (Gallus gallus (Chicken)).